Reading from the N-terminus, the 293-residue chain is 4-diphosphocytidyl-2-C-methyl-D-erythritol kinase (293 aa).

Lysine 11 is a catalytic residue. Residue 96-106 coordinates ATP; the sequence is PVAAGLGGGSS. Residue aspartate 138 is part of the active site.

The protein belongs to the GHMP kinase family. IspE subfamily.

The catalysed reaction is 4-CDP-2-C-methyl-D-erythritol + ATP = 4-CDP-2-C-methyl-D-erythritol 2-phosphate + ADP + H(+). It participates in isoprenoid biosynthesis; isopentenyl diphosphate biosynthesis via DXP pathway; isopentenyl diphosphate from 1-deoxy-D-xylulose 5-phosphate: step 3/6. Functionally, catalyzes the phosphorylation of the position 2 hydroxy group of 4-diphosphocytidyl-2C-methyl-D-erythritol. This chain is 4-diphosphocytidyl-2-C-methyl-D-erythritol kinase, found in Xanthobacter autotrophicus (strain ATCC BAA-1158 / Py2).